We begin with the raw amino-acid sequence, 146 residues long: Anti-sigma F factor (146 aa).

This sequence belongs to the anti-sigma-factor family.

The catalysed reaction is L-seryl-[protein] + ATP = O-phospho-L-seryl-[protein] + ADP + H(+). The enzyme catalyses L-threonyl-[protein] + ATP = O-phospho-L-threonyl-[protein] + ADP + H(+). Its function is as follows. Binds to sigma F and blocks its ability to form an RNA polymerase holoenzyme (E-sigma F). Phosphorylates SpoIIAA on a serine residue. This phosphorylation may enable SpoIIAA to act as an anti-anti-sigma factor that counteracts SpoIIAB and thus releases sigma F from inhibition. The chain is Anti-sigma F factor from Geobacillus kaustophilus (strain HTA426).